The sequence spans 567 residues: MSDPTRPARIDERSRNVTEGVMRAPNRSMYYAMGYRETDFSKPMVGVASAHSTITPCNSGLQPLADTVVAALKEAGANPQLFGTPTVSDGIGMGTEGMKYSLVSREVIADSIETCVNGLWQDGVVVIGGCDKNMPGGMMALVRTNVPGIYVYGGTIKPGHYQGRDLNIISVFEAVGEFTAGRLDPVDFKEIEKRACPGSGSCGGMYTANTMSAAFEALGMSLPYSSTMANEDAEKLASAAESARVLVEAIKRGLRPRDIVTREAIENAVSVIMATGGSTNAVLHFLAIAHAAEVPWTIDDFECIRRRVPVIVDMKPSGHYLATDLHQAGGIPQVMKLLLEAGLLHGECVTITGRTIAEVLENVPAAPRADQGVIRTLSDPLYAEGHLAILRGNLSPEGCVAKISGLKNPAITGPARVFDSEDDAMGAIMARRIVEGDVVVIRYEGPKGGPGMREMLAPTSALVGQGLGESVGLITDGRFSGGTWGMVVGHVSPEAFVGGPIALVRDGDSVTIDAHRQLVQLNVGDEELARRAADWTPPSPRYTRGVLAKFAKLTSSASKGAVTDLDL.

C57 is a [2Fe-2S] cluster binding site. Position 89 (D89) interacts with Mg(2+). C130 is a [2Fe-2S] cluster binding site. 2 residues coordinate Mg(2+): D131 and K132. K132 bears the N6-carboxylysine mark. C202 contacts [2Fe-2S] cluster. Residue E454 coordinates Mg(2+). The active-site Proton acceptor is the S480.

The protein belongs to the IlvD/Edd family. Homodimer. [2Fe-2S] cluster serves as cofactor. Mg(2+) is required as a cofactor.

The catalysed reaction is (2R)-2,3-dihydroxy-3-methylbutanoate = 3-methyl-2-oxobutanoate + H2O. The enzyme catalyses (2R,3R)-2,3-dihydroxy-3-methylpentanoate = (S)-3-methyl-2-oxopentanoate + H2O. It participates in amino-acid biosynthesis; L-isoleucine biosynthesis; L-isoleucine from 2-oxobutanoate: step 3/4. The protein operates within amino-acid biosynthesis; L-valine biosynthesis; L-valine from pyruvate: step 3/4. Functionally, functions in the biosynthesis of branched-chain amino acids. Catalyzes the dehydration of (2R,3R)-2,3-dihydroxy-3-methylpentanoate (2,3-dihydroxy-3-methylvalerate) into 2-oxo-3-methylpentanoate (2-oxo-3-methylvalerate) and of (2R)-2,3-dihydroxy-3-methylbutanoate (2,3-dihydroxyisovalerate) into 2-oxo-3-methylbutanoate (2-oxoisovalerate), the penultimate precursor to L-isoleucine and L-valine, respectively. In Aromatoleum aromaticum (strain DSM 19018 / LMG 30748 / EbN1) (Azoarcus sp. (strain EbN1)), this protein is Dihydroxy-acid dehydratase 3.